The following is a 146-amino-acid chain: Large ribosomal subunit protein uL13 (146 aa).

The protein belongs to the universal ribosomal protein uL13 family. In terms of assembly, part of the 50S ribosomal subunit.

Its function is as follows. This protein is one of the early assembly proteins of the 50S ribosomal subunit, although it is not seen to bind rRNA by itself. It is important during the early stages of 50S assembly. This chain is Large ribosomal subunit protein uL13, found in Mycoplasma genitalium (strain ATCC 33530 / DSM 19775 / NCTC 10195 / G37) (Mycoplasmoides genitalium).